A 29-amino-acid polypeptide reads, in one-letter code: Beta-hexatoxin-Mr1a (29 aa).

3 disulfide bridges follow: C2–C16, C9–C21, and C15–C26.

This sequence belongs to the neurotoxin 15 family. 01 (magi-5) subfamily. As to expression, expressed by the venom gland.

The protein localises to the secreted. Functionally, insect and vertebrate active toxin. Binds at site 4 of mammalian voltage-gated sodium channels and shifts the activation voltage of the mammalian rNav1.2a (SCN2A) channel to more hyperpolarized voltages, whereas the insect channel, DmNav1 (para), is not affected. Causes temporary paralysis when injected into lepidopteran larvae at 8.6 nmol/g. A low intracranial injection dose into mice causes lacrimation, closure of the eyes and sweating. A high injection dose causes extensive lacrimation and death. This is Beta-hexatoxin-Mr1a from Macrothele raveni (Funnel-web spider).